Reading from the N-terminus, the 336-residue chain is Ornithine carbamoyltransferase, catabolic (336 aa).

Residues 62–65, Q89, R113, and 140–143 each bind carbamoyl phosphate; these read STRT and HPTQ. L-ornithine-binding positions include N172, D236, and 240 to 241; that span reads SM. Residues 277–278 and R322 contribute to the carbamoyl phosphate site; that span reads CL.

It belongs to the aspartate/ornithine carbamoyltransferase superfamily. OTCase family.

The protein localises to the cytoplasm. The catalysed reaction is carbamoyl phosphate + L-ornithine = L-citrulline + phosphate + H(+). It functions in the pathway amino-acid degradation; L-arginine degradation via ADI pathway; carbamoyl phosphate from L-arginine: step 2/2. Its function is as follows. Reversibly catalyzes the transfer of the carbamoyl group from carbamoyl phosphate (CP) to the N(epsilon) atom of ornithine (ORN) to produce L-citrulline. This is Ornithine carbamoyltransferase, catabolic from Staphylococcus aureus (strain MRSA252).